The primary structure comprises 304 residues: D-alanine--D-alanine ligase (304 aa).

The 197-residue stretch at Lys103–Lys299 folds into the ATP-grasp domain. ATP is bound at residue Glu129–Ser184. Mg(2+) is bound by residues Asp253, Glu266, and Asn268.

Belongs to the D-alanine--D-alanine ligase family. Mg(2+) is required as a cofactor. Requires Mn(2+) as cofactor.

The protein localises to the cytoplasm. It catalyses the reaction 2 D-alanine + ATP = D-alanyl-D-alanine + ADP + phosphate + H(+). It participates in cell wall biogenesis; peptidoglycan biosynthesis. In terms of biological role, cell wall formation. The protein is D-alanine--D-alanine ligase of Neisseria gonorrhoeae (strain ATCC 700825 / FA 1090).